We begin with the raw amino-acid sequence, 220 residues long: Uracil-DNA glycosylase 1 (220 aa).

D65 (proton acceptor) is an active-site residue.

Belongs to the uracil-DNA glycosylase (UDG) superfamily. UNG family.

It localises to the cytoplasm. The enzyme catalyses Hydrolyzes single-stranded DNA or mismatched double-stranded DNA and polynucleotides, releasing free uracil.. Its function is as follows. Excises uracil residues from the DNA which can arise as a result of misincorporation of dUMP residues by DNA polymerase or due to deamination of cytosine. The protein is Uracil-DNA glycosylase 1 of Bacteroides fragilis (strain ATCC 25285 / DSM 2151 / CCUG 4856 / JCM 11019 / LMG 10263 / NCTC 9343 / Onslow / VPI 2553 / EN-2).